The chain runs to 60 residues: Myrmicitoxin(1)-Pr4c (60 aa).

A signal peptide spans 1 to 23 (MKAIIFLFAVLTVVAIIIPIISG). Residues 24–33 (EPNAGPHAAS) constitute a propeptide that is removed on maturation. At Gln-59 the chain carries Glutamine amide.

This sequence belongs to the formicidae venom clade 2 family. In terms of tissue distribution, expressed by the venom gland.

It localises to the secreted. In terms of biological role, toxin that causes a rapid and irreversible paralysis when intrathoracically injected into insects (blowflies). Does not cause spontaneous nocifensive behaviors by intraplantar injection in mice. In Pogonomyrmex rugosus (Desert harvester ant), this protein is Myrmicitoxin(1)-Pr4c.